Reading from the N-terminus, the 393-residue chain is NAD(P)H-quinone oxidoreductase subunit H, chloroplastic (393 aa).

Belongs to the complex I 49 kDa subunit family. NDH is composed of at least 16 different subunits, 5 of which are encoded in the nucleus.

It is found in the plastid. The protein localises to the chloroplast thylakoid membrane. It catalyses the reaction a plastoquinone + NADH + (n+1) H(+)(in) = a plastoquinol + NAD(+) + n H(+)(out). The catalysed reaction is a plastoquinone + NADPH + (n+1) H(+)(in) = a plastoquinol + NADP(+) + n H(+)(out). NDH shuttles electrons from NAD(P)H:plastoquinone, via FMN and iron-sulfur (Fe-S) centers, to quinones in the photosynthetic chain and possibly in a chloroplast respiratory chain. The immediate electron acceptor for the enzyme in this species is believed to be plastoquinone. Couples the redox reaction to proton translocation, and thus conserves the redox energy in a proton gradient. This Solanum lycopersicum (Tomato) protein is NAD(P)H-quinone oxidoreductase subunit H, chloroplastic.